Here is a 201-residue protein sequence, read N- to C-terminus: 3-isopropylmalate dehydratase small subunit (201 aa).

Belongs to the LeuD family. LeuD type 1 subfamily. In terms of assembly, heterodimer of LeuC and LeuD.

It carries out the reaction (2R,3S)-3-isopropylmalate = (2S)-2-isopropylmalate. Its pathway is amino-acid biosynthesis; L-leucine biosynthesis; L-leucine from 3-methyl-2-oxobutanoate: step 2/4. Catalyzes the isomerization between 2-isopropylmalate and 3-isopropylmalate, via the formation of 2-isopropylmaleate. The sequence is that of 3-isopropylmalate dehydratase small subunit from Ruegeria pomeroyi (strain ATCC 700808 / DSM 15171 / DSS-3) (Silicibacter pomeroyi).